Here is a 308-residue protein sequence, read N- to C-terminus: Glutaminase (308 aa).

Substrate contacts are provided by serine 66, asparagine 117, glutamate 161, asparagine 168, tyrosine 192, tyrosine 244, and valine 262.

This sequence belongs to the glutaminase family. As to quaternary structure, homotetramer.

It catalyses the reaction L-glutamine + H2O = L-glutamate + NH4(+). The sequence is that of Glutaminase from Photorhabdus laumondii subsp. laumondii (strain DSM 15139 / CIP 105565 / TT01) (Photorhabdus luminescens subsp. laumondii).